Consider the following 374-residue polypeptide: UPF0496 protein At3g28270 (374 aa).

Positions Lys171–Leu210 form a coiled coil. Helical transmembrane passes span Val214–Gly234 and Val235–Gly255. Residues Val256–Asp321 are a coiled coil.

This sequence belongs to the UPF0496 family.

The protein localises to the membrane. The polypeptide is UPF0496 protein At3g28270 (Arabidopsis thaliana (Mouse-ear cress)).